The following is a 230-amino-acid chain: Small ribosomal subunit protein uS3 (230 aa).

A KH type-2 domain is found at 39-107 (VRNYLFKKLI…PVHINIEEIK (69 aa)).

Belongs to the universal ribosomal protein uS3 family. Part of the 30S ribosomal subunit. Forms a tight complex with proteins S10 and S14.

Functionally, binds the lower part of the 30S subunit head. Binds mRNA in the 70S ribosome, positioning it for translation. This chain is Small ribosomal subunit protein uS3, found in Vesicomyosocius okutanii subsp. Calyptogena okutanii (strain HA).